A 256-amino-acid polypeptide reads, in one-letter code: Acetyl-coenzyme A carboxylase carboxyl transferase subunit alpha (256 aa).

The region spanning 1 to 236 is the CoA carboxyltransferase C-terminal domain; the sequence is MTKITRIVRE…KQELLVELEQ (236 aa).

It belongs to the AccA family. As to quaternary structure, acetyl-CoA carboxylase is a heterohexamer composed of biotin carboxyl carrier protein (AccB), biotin carboxylase (AccC) and two subunits each of ACCase subunit alpha (AccA) and ACCase subunit beta (AccD).

It is found in the cytoplasm. It carries out the reaction N(6)-carboxybiotinyl-L-lysyl-[protein] + acetyl-CoA = N(6)-biotinyl-L-lysyl-[protein] + malonyl-CoA. It participates in lipid metabolism; malonyl-CoA biosynthesis; malonyl-CoA from acetyl-CoA: step 1/1. Its function is as follows. Component of the acetyl coenzyme A carboxylase (ACC) complex. First, biotin carboxylase catalyzes the carboxylation of biotin on its carrier protein (BCCP) and then the CO(2) group is transferred by the carboxyltransferase to acetyl-CoA to form malonyl-CoA. In Streptococcus gordonii (strain Challis / ATCC 35105 / BCRC 15272 / CH1 / DL1 / V288), this protein is Acetyl-coenzyme A carboxylase carboxyl transferase subunit alpha.